Here is a 42-residue protein sequence, read N- to C-terminus: Photosystem I reaction center subunit IX (42 aa).

The chain crosses the membrane as a helical span at residues 7-27 (YLSVAPVLSTLWFVSLAGLLI).

Belongs to the PsaJ family.

It is found in the plastid. The protein localises to the chloroplast thylakoid membrane. Functionally, may help in the organization of the PsaE and PsaF subunits. The sequence is that of Photosystem I reaction center subunit IX from Capsella bursa-pastoris (Shepherd's purse).